Reading from the N-terminus, the 199-residue chain is Auxin-responsive protein IAA1 (199 aa).

The short motif at 25–29 is the EAR-like (transcriptional repression) element; sequence LTLRL. A disordered region spans residues 31–74; sequence GSLAAAAAPDPDRKRSSPSSSDAADAADNSSPLAAAADAPPAPK. Residues 47-69 are compositionally biased toward low complexity; sequence SPSSSDAADAADNSSPLAAAADA. The 95-residue stretch at 93–187 folds into the PB1 domain; sequence AKFVKVAVDG…TCQRLRLMKS (95 aa).

Belongs to the Aux/IAA family. As to quaternary structure, homodimers and heterodimers. As to expression, highly expressed in flowers. Expressed at low levels in roots and shoots.

The protein resides in the nucleus. Aux/IAA proteins are short-lived transcriptional factors that function as repressors of early auxin response genes at low auxin concentrations. The protein is Auxin-responsive protein IAA1 (IAA1) of Oryza sativa subsp. japonica (Rice).